We begin with the raw amino-acid sequence, 979 residues long: Translation initiation factor IF-2 (979 aa).

Residues Val68 to Leu392 form a disordered region. 3 stretches are compositionally biased toward basic and acidic residues: residues Gln102–Glu179, Glu217–Arg229, and Thr260–Gly273. Polar residues predominate over residues Pro309–Ser326. Residues Asp347–Leu356 show a composition bias toward basic and acidic residues. The tr-type G domain maps to Ala478–Glu646. The G1 stretch occupies residues Gly487 to Thr494. A GTP-binding site is contributed by Gly487–Thr494. The segment at Gly512–His516 is G2. The G3 stretch occupies residues Asp534 to Gly537. GTP-binding positions include Asp534–His538 and Asn588–Asp591. The interval Asn588–Asp591 is G4. The tract at residues Ser624–Lys626 is G5.

The protein belongs to the TRAFAC class translation factor GTPase superfamily. Classic translation factor GTPase family. IF-2 subfamily.

The protein resides in the cytoplasm. Its function is as follows. One of the essential components for the initiation of protein synthesis. Protects formylmethionyl-tRNA from spontaneous hydrolysis and promotes its binding to the 30S ribosomal subunits. Also involved in the hydrolysis of GTP during the formation of the 70S ribosomal complex. The chain is Translation initiation factor IF-2 from Porphyromonas gingivalis (strain ATCC 33277 / DSM 20709 / CIP 103683 / JCM 12257 / NCTC 11834 / 2561).